The following is a 398-amino-acid chain: CCA-adding enzyme (398 aa).

2 residues coordinate ATP: Gly32 and Arg35. CTP is bound by residues Gly32 and Arg35. 2 residues coordinate Mg(2+): Asp45 and Asp47. Arg119, Asp162, Arg165, Arg168, and Arg171 together coordinate ATP. Arg119, Asp162, Arg165, Arg168, and Arg171 together coordinate CTP.

Belongs to the tRNA nucleotidyltransferase/poly(A) polymerase family. Bacterial CCA-adding enzyme type 3 subfamily. Homodimer. Requires Mg(2+) as cofactor.

The catalysed reaction is a tRNA precursor + 2 CTP + ATP = a tRNA with a 3' CCA end + 3 diphosphate. It carries out the reaction a tRNA with a 3' CCA end + 2 CTP + ATP = a tRNA with a 3' CCACCA end + 3 diphosphate. Catalyzes the addition and repair of the essential 3'-terminal CCA sequence in tRNAs without using a nucleic acid template. Adds these three nucleotides in the order of C, C, and A to the tRNA nucleotide-73, using CTP and ATP as substrates and producing inorganic pyrophosphate. tRNA 3'-terminal CCA addition is required both for tRNA processing and repair. Also involved in tRNA surveillance by mediating tandem CCA addition to generate a CCACCA at the 3' terminus of unstable tRNAs. While stable tRNAs receive only 3'-terminal CCA, unstable tRNAs are marked with CCACCA and rapidly degraded. This is CCA-adding enzyme from Lactococcus lactis subsp. lactis (strain IL1403) (Streptococcus lactis).